The following is a 154-amino-acid chain: Ascorbate-specific PTS system EIIA component (154 aa).

Positions 6–150 (SLAENKSIRL…QEVLDLIDRT (145 aa)) constitute a PTS EIIA type-2 domain. Residue His-68 is the Tele-phosphohistidine intermediate of the active site. His-68 carries the phosphohistidine modification.

Its subcellular location is the cytoplasm. Functionally, the phosphoenolpyruvate-dependent sugar phosphotransferase system (sugar PTS), a major carbohydrate active transport system, catalyzes the phosphorylation of incoming sugar substrates concomitantly with their translocation across the cell membrane. The enzyme II UlaABC PTS system is involved in ascorbate transport. This chain is Ascorbate-specific PTS system EIIA component (ulaC), found in Escherichia coli O157:H7.